Consider the following 857-residue polypeptide: Alanine--tRNA ligase (857 aa).

Zn(2+) contacts are provided by His-556, His-560, Cys-658, and His-662.

This sequence belongs to the class-II aminoacyl-tRNA synthetase family. The cofactor is Zn(2+).

The protein localises to the cytoplasm. The enzyme catalyses tRNA(Ala) + L-alanine + ATP = L-alanyl-tRNA(Ala) + AMP + diphosphate. Catalyzes the attachment of alanine to tRNA(Ala) in a two-step reaction: alanine is first activated by ATP to form Ala-AMP and then transferred to the acceptor end of tRNA(Ala). Also edits incorrectly charged Ser-tRNA(Ala) and Gly-tRNA(Ala) via its editing domain. The chain is Alanine--tRNA ligase from Sulfurovum sp. (strain NBC37-1).